We begin with the raw amino-acid sequence, 186 residues long: Putative 5'(3')-deoxyribonucleotidase (186 aa).

The active-site Nucleophile is the Asp-6. Mg(2+) is bound by residues Asp-6, Asp-8, and Asp-137. Residue Asp-8 is the Proton donor of the active site.

The protein belongs to the 5'(3')-deoxyribonucleotidase family. Mg(2+) serves as cofactor.

Functionally, dephosphorylates the 5' and 2'(3')-phosphates of deoxyribonucleotides. This chain is Putative 5'(3')-deoxyribonucleotidase, found in Bordetella bronchiseptica (strain ATCC BAA-588 / NCTC 13252 / RB50) (Alcaligenes bronchisepticus).